The following is a 339-amino-acid chain: N-acetyl-gamma-glutamyl-phosphate reductase 1 (339 aa).

The active site involves cysteine 149.

Belongs to the NAGSA dehydrogenase family. Type 1 subfamily.

The protein resides in the cytoplasm. It carries out the reaction N-acetyl-L-glutamate 5-semialdehyde + phosphate + NADP(+) = N-acetyl-L-glutamyl 5-phosphate + NADPH + H(+). It functions in the pathway amino-acid biosynthesis; L-arginine biosynthesis; N(2)-acetyl-L-ornithine from L-glutamate: step 3/4. Its function is as follows. Catalyzes the NADPH-dependent reduction of N-acetyl-5-glutamyl phosphate to yield N-acetyl-L-glutamate 5-semialdehyde. The polypeptide is N-acetyl-gamma-glutamyl-phosphate reductase 1 (Lactiplantibacillus plantarum (strain ATCC BAA-793 / NCIMB 8826 / WCFS1) (Lactobacillus plantarum)).